Here is a 275-residue protein sequence, read N- to C-terminus: 4-hydroxy-3-methylbut-2-enyl diphosphate reductase (275 aa).

Cys12 contacts [4Fe-4S] cluster. (2E)-4-hydroxy-3-methylbut-2-enyl diphosphate is bound by residues His36 and His70. 2 residues coordinate dimethylallyl diphosphate: His36 and His70. Residues His36 and His70 each coordinate isopentenyl diphosphate. Residue Cys92 coordinates [4Fe-4S] cluster. His120 contributes to the (2E)-4-hydroxy-3-methylbut-2-enyl diphosphate binding site. A dimethylallyl diphosphate-binding site is contributed by His120. Residue His120 coordinates isopentenyl diphosphate. Residue Glu122 is the Proton donor of the active site. Residue Thr158 coordinates (2E)-4-hydroxy-3-methylbut-2-enyl diphosphate. Residue Cys186 coordinates [4Fe-4S] cluster. 4 residues coordinate (2E)-4-hydroxy-3-methylbut-2-enyl diphosphate: Ser214, Ser215, Asn216, and Ser258. Residues Ser214, Ser215, Asn216, and Ser258 each coordinate dimethylallyl diphosphate. Isopentenyl diphosphate contacts are provided by Ser214, Ser215, Asn216, and Ser258.

Belongs to the IspH family. [4Fe-4S] cluster is required as a cofactor.

The catalysed reaction is isopentenyl diphosphate + 2 oxidized [2Fe-2S]-[ferredoxin] + H2O = (2E)-4-hydroxy-3-methylbut-2-enyl diphosphate + 2 reduced [2Fe-2S]-[ferredoxin] + 2 H(+). It catalyses the reaction dimethylallyl diphosphate + 2 oxidized [2Fe-2S]-[ferredoxin] + H2O = (2E)-4-hydroxy-3-methylbut-2-enyl diphosphate + 2 reduced [2Fe-2S]-[ferredoxin] + 2 H(+). It functions in the pathway isoprenoid biosynthesis; dimethylallyl diphosphate biosynthesis; dimethylallyl diphosphate from (2E)-4-hydroxy-3-methylbutenyl diphosphate: step 1/1. It participates in isoprenoid biosynthesis; isopentenyl diphosphate biosynthesis via DXP pathway; isopentenyl diphosphate from 1-deoxy-D-xylulose 5-phosphate: step 6/6. Catalyzes the conversion of 1-hydroxy-2-methyl-2-(E)-butenyl 4-diphosphate (HMBPP) into a mixture of isopentenyl diphosphate (IPP) and dimethylallyl diphosphate (DMAPP). Acts in the terminal step of the DOXP/MEP pathway for isoprenoid precursor biosynthesis. This Campylobacter hominis (strain ATCC BAA-381 / DSM 21671 / CCUG 45161 / LMG 19568 / NCTC 13146 / CH001A) protein is 4-hydroxy-3-methylbut-2-enyl diphosphate reductase.